The following is a 423-amino-acid chain: AP-1 complex subunit mu-2 (423 aa).

An MHD domain is found at 168-421 (KNEVFIDVIE…ITQSGDYQLR (254 aa)).

The protein belongs to the adaptor complexes medium subunit family. In terms of assembly, adaptor protein complex 1 (AP-1) is a heterotetramer composed of two large adaptins (gamma-type subunit AP1G1 and beta-type subunit AP1B1), a medium adaptin (mu-type subunit AP1M1 or AP1M2) and a small adaptin (sigma-type subunit AP1S1 or AP1S2 or AP1S3). Interacts with P2X4. In terms of processing, phosphorylation of membrane-bound AP1M1/AP1M2 increases its affinity for sorting signals.

The protein localises to the cytoplasmic vesicle. Its subcellular location is the clathrin-coated vesicle membrane. The protein resides in the golgi apparatus. Its function is as follows. Subunit of clathrin-associated adaptor protein complex 1 that plays a role in protein sorting in the trans-Golgi network (TGN) and endosomes. The AP complexes mediate the recruitment of clathrin to membranes and the recognition of sorting signals within the cytosolic tails of transmembrane cargo molecules. The chain is AP-1 complex subunit mu-2 from Bos taurus (Bovine).